Here is a 402-residue protein sequence, read N- to C-terminus: MPPVNFGSYQTKIYHDGTNLNRLPAITTNPTLLEKHAREVLSSRAYSYIAGGAGEKSTMEANRLAFRQWKLVPRVMRPMDDQSISVNLFGQEYKSPLIVGPVGVQGLFHRDKETGVAQVCSELDVPYTLSTASSSSIEDVAAANQAGHRWFQLYWVHDEEILLSLLKRAKENGFTVLVVSLDTWTLGWRPTDLDQGYFPFYAGIGNDVGFSDPVFRAKHEKKGGKIEDDIIGAANAWVSELDDRPHTWEQVEFLRKHWQGPIVLKGIQHADDARRALETGCEGLVVSNHGGRQVDGAIGSLDALPDIVDAVGDKMTVMFDSGVRTGADVIKALCLGAKAVLVGRPVIYGLAIGGKEGAKSVIECLLADLWQGMGLAGMRTVADCNRDCMRRISYPGDLKTML.

In terms of domain architecture, FMN hydroxy acid dehydrogenase spans 22 to 394 (RLPAITTNPT…NRDCMRRISY (373 aa)). An a 2-oxocarboxylate-binding site is contributed by tyrosine 48. FMN contacts are provided by serine 130 and glutamine 152. Residues tyrosine 154 and arginine 189 each contribute to the a 2-oxocarboxylate site. Lysine 265 is a binding site for FMN. Histidine 289 (proton acceptor) is an active-site residue. Arginine 292 is a binding site for a 2-oxocarboxylate. FMN contacts are provided by residues 320–324 (DSGVR) and 343–344 (GR).

It belongs to the FMN-dependent alpha-hydroxy acid dehydrogenase family. FMN serves as cofactor.

Functionally, FMN-dependent alpha-hydroxy acid dehydrogenase; part of the gene cluster that mediates the biosynthesis of quinolactacin A2 (QUL A2), a fungal alkaloid that features a quinolone-gamma-lactam hybrid, which is a potential pharmacophore for the treatment of cancer and Alzheimer's disease. The quinolone-gamma-lactam hybrid scaffold is synthesized from the combination of L-isoleucine (L-Ile) and the nonproteinogenic amino acid L-kynurenine, followed by quinolone cyclization, oxidative decarboxylation, and lactam formation. Additionally, the N-methyl group is derived from methionine, which might be catalyzed by an S-adenosylmethionine (SAM)-dependent methyltransferase. Bioconversion of L-tryptophan to L-kynurenine could be catalyzed by the indoleamine-2,3-dioxygenase (IDO) qulI to produce an unstable product, N-formyl-L-kynurenine, followed by kynurenine formamidase catalyzed hydrolysis. QulM then acts as a methyltransferase that methylates L-kynurenine at the N-4 position. The FMN-dependent alpha-hydroxy acid dehydrogenase qulF than functions as an oxidative decarboxylase which converts N-methylkynurenine into 2-aminobenzoylacetamide via 2 tandem reactions, including dehydrogenation and decarboxylation. An amidase located outside of the qul gene cluster further produces the unstable beta-keto acid precursor N-methyl-2-aminobenzoylacetate, which could be spontaneously dehydrated to form N-methyl-4-hydroxy-2-quinolone. The NRPS qulB is able to incorporate N-methyl-2-aminobenzoylacetate and efficiently compete with the spontaneous reaction. By further extending the beta-keto acid with L-Ile, qulA performs a Dieckmann condensation to form the gamma-lactam ring and release a 4-ketopyrrolidinone intermediate from the assembly line. This intermediate could plausibly further undergo a spontaneous cyclization to yield the final quinolone-gamma-lactam hybrid structure. The polypeptide is FMN-dependent alpha-hydroxy acid dehydrogenase qulF (Penicillium citrinum).